Here is a 552-residue protein sequence, read N- to C-terminus: CTP synthase (552 aa).

Residues 1 to 270 (MTKYVFVTGG…DRIICEELKL (270 aa)) form an amidoligase domain region. S13 is a binding site for CTP. Position 13 (S13) interacts with UTP. Residues 14-19 (SLGKGI) and D71 each bind ATP. Residues D71 and E144 each contribute to the Mg(2+) site. CTP is bound by residues 151–153 (DIE), 191–196 (KTKPTQ), and K227. UTP is bound by residues 191 to 196 (KTKPTQ) and K227. The 253-residue stretch at 295 to 547 (TIGMVGKYVD…VEAALANKQA (253 aa)) folds into the Glutamine amidotransferase type-1 domain. An L-glutamine-binding site is contributed by G356. Residue C383 is the Nucleophile; for glutamine hydrolysis of the active site. L-glutamine-binding positions include 384–387 (LGMQ), E407, and R473. Residues H520 and E522 contribute to the active site.

It belongs to the CTP synthase family. As to quaternary structure, homotetramer.

The enzyme catalyses UTP + L-glutamine + ATP + H2O = CTP + L-glutamate + ADP + phosphate + 2 H(+). It catalyses the reaction L-glutamine + H2O = L-glutamate + NH4(+). It carries out the reaction UTP + NH4(+) + ATP = CTP + ADP + phosphate + 2 H(+). Its pathway is pyrimidine metabolism; CTP biosynthesis via de novo pathway; CTP from UDP: step 2/2. With respect to regulation, allosterically activated by GTP, when glutamine is the substrate; GTP has no effect on the reaction when ammonia is the substrate. The allosteric effector GTP functions by stabilizing the protein conformation that binds the tetrahedral intermediate(s) formed during glutamine hydrolysis. Inhibited by the product CTP, via allosteric rather than competitive inhibition. Its function is as follows. Catalyzes the ATP-dependent amination of UTP to CTP with either L-glutamine or ammonia as the source of nitrogen. Regulates intracellular CTP levels through interactions with the four ribonucleotide triphosphates. The protein is CTP synthase of Burkholderia cenocepacia (strain ATCC BAA-245 / DSM 16553 / LMG 16656 / NCTC 13227 / J2315 / CF5610) (Burkholderia cepacia (strain J2315)).